Here is a 329-residue protein sequence, read N- to C-terminus: Palmitoyltransferase pfa3 (329 aa).

Helical transmembrane passes span 14 to 34 (VLVILAKYCMQIIALSLMSGV), 49 to 69 (VGIIILFLYIMIVTCYVLTNL), 141 to 161 (FFFLECFYLNLYSICVLYSTF), 177 to 197 (AIYLVFWGFLFAFAVGMSIVM), and 243 to 263 (IMGKSPFLWLLPFPNSIGEGV). Residues 97–147 (RFCEKCQEYKCDRSHHCSQCNKCILRMDHHCMWFKNCVGFRNHKFFFLECF) enclose the DHHC domain.

Belongs to the DHHC palmitoyltransferase family. PFA3 subfamily. Autopalmitoylated.

The protein resides in the vacuole membrane. Its subcellular location is the golgi apparatus membrane. The catalysed reaction is L-cysteinyl-[protein] + hexadecanoyl-CoA = S-hexadecanoyl-L-cysteinyl-[protein] + CoA. Palmitoyltransferase specific for VAC8. Palmitoylates VAC8 at one or more of its N-terminal cysteine residues, which is required for its proper membrane localization. This is Palmitoyltransferase pfa3 (pfa3) from Schizosaccharomyces pombe (strain 972 / ATCC 24843) (Fission yeast).